A 614-amino-acid chain; its full sequence is BTB/POZ domain-containing protein At5g48800 (614 aa).

Residues 43 to 111 (SDITIEVNGG…CYGINFEITS (69 aa)) form the BTB domain. Residues 219–484 (DWWIEDLSVL…VQVLYFEQLK (266 aa)) enclose the NPH3 domain. Residue Y425 is modified to Phosphotyrosine. 2 disordered regions span residues 492 to 525 (SYSD…KDNY) and 583 to 614 (GHSS…ASTD). The span at 507 to 521 (SWRINSGALSATMSP) shows a compositional bias: polar residues. Residues 522–562 (KDNYASLRRENRELKLELARLRMRLNDLEKEHICMKRDMQR) are a coiled coil. Residues 583–597 (GHSSSRGSSSPSKQS) show a composition bias toward low complexity.

It belongs to the NPH3 family.

It participates in protein modification; protein ubiquitination. Its function is as follows. May act as a substrate-specific adapter of an E3 ubiquitin-protein ligase complex (CUL3-RBX1-BTB) which mediates the ubiquitination and subsequent proteasomal degradation of target proteins. This chain is BTB/POZ domain-containing protein At5g48800, found in Arabidopsis thaliana (Mouse-ear cress).